The chain runs to 311 residues: Putative HTH-type transcriptional regulatory protein PTO0557 (311 aa).

Positions 132–186 constitute an HTH cro/C1-type domain; sequence MRRIRELKGYSVGYLSSKLGISRRSISLYESGSSATIDIYLKLEETLGEDLTKDI. The segment at residues 143–162 is a DNA-binding region (H-T-H motif); the sequence is VGYLSSKLGISRRSISLYES.

The protein is Putative HTH-type transcriptional regulatory protein PTO0557 of Picrophilus torridus (strain ATCC 700027 / DSM 9790 / JCM 10055 / NBRC 100828 / KAW 2/3).